We begin with the raw amino-acid sequence, 244 residues long: UDP-2,3-diacylglucosamine hydrolase (244 aa).

5 residues coordinate Mn(2+): Asp-8, His-10, Asp-41, Asn-79, and His-114. A substrate-binding site is contributed by 79-80; it reads NR. Substrate contacts are provided by Asp-122, Ser-160, Asn-164, Lys-167, and His-195. His-195 and His-197 together coordinate Mn(2+).

This sequence belongs to the LpxH family. Mn(2+) serves as cofactor.

It is found in the cell inner membrane. It catalyses the reaction UDP-2-N,3-O-bis[(3R)-3-hydroxytetradecanoyl]-alpha-D-glucosamine + H2O = 2-N,3-O-bis[(3R)-3-hydroxytetradecanoyl]-alpha-D-glucosaminyl 1-phosphate + UMP + 2 H(+). It participates in glycolipid biosynthesis; lipid IV(A) biosynthesis; lipid IV(A) from (3R)-3-hydroxytetradecanoyl-[acyl-carrier-protein] and UDP-N-acetyl-alpha-D-glucosamine: step 4/6. In terms of biological role, hydrolyzes the pyrophosphate bond of UDP-2,3-diacylglucosamine to yield 2,3-diacylglucosamine 1-phosphate (lipid X) and UMP by catalyzing the attack of water at the alpha-P atom. Involved in the biosynthesis of lipid A, a phosphorylated glycolipid that anchors the lipopolysaccharide to the outer membrane of the cell. The protein is UDP-2,3-diacylglucosamine hydrolase of Hahella chejuensis (strain KCTC 2396).